The primary structure comprises 66 residues: Cell division protein ZapB (66 aa).

The stretch at 3-59 forms a coiled coil; that stretch reads LELLSQLETKIQATLENIELLKMELEEEKQKSTQLAEKNQKLQQDLNSWSDKVNGLV.

The protein belongs to the ZapB family. As to quaternary structure, homodimer. The ends of the coiled-coil dimer bind to each other, forming polymers. Interacts with FtsZ.

It is found in the cytoplasm. Functionally, non-essential, abundant cell division factor that is required for proper Z-ring formation. It is recruited early to the divisome by direct interaction with FtsZ, stimulating Z-ring assembly and thereby promoting cell division earlier in the cell cycle. Its recruitment to the Z-ring requires functional FtsA or ZipA. The protein is Cell division protein ZapB of Shewanella denitrificans (strain OS217 / ATCC BAA-1090 / DSM 15013).